The sequence spans 409 residues: Killer cell lectin-like receptor subfamily G member 2 (409 aa).

The tract at residues 1–120 (MEESWEAAPG…GAEPAPSAWA (120 aa)) is disordered. Residues 41-53 (PEGPESSPSPAGA) show a composition bias toward low complexity. A compositionally biased stretch (pro residues) spans 72–81 (SPRPGSPRVP). The segment covering 104–120 (PRNGEAPGAEPAPSAWA) has biased composition (low complexity). Position 158 is a phosphoserine (Ser-158). Residues 193–216 (TESGCDAEGRASPAEGSAGSPGSP) form a disordered region. Residues 202–216 (RASPAEGSAGSPGSP) are compositionally biased toward low complexity. Residues 263-283 (WALAFMAVLLAVSGVVIVVLA) traverse the membrane as a helical segment. Residues 300-405 (SEEHCYYFSA…CSTPRPWVCA (106 aa)) form the C-type lectin domain. 2 cysteine pairs are disulfide-bonded: Cys-321/Cys-404 and Cys-383/Cys-396.

The protein resides in the membrane. This chain is Killer cell lectin-like receptor subfamily G member 2 (KLRG2), found in Homo sapiens (Human).